The primary structure comprises 687 residues: Polyphosphate kinase (687 aa).

N45 is a binding site for ATP. Mg(2+) is bound by residues R375 and R405. Catalysis depends on H435, which acts as the Phosphohistidine intermediate. Residues Y472, R568, and H596 each contribute to the ATP site.

This sequence belongs to the polyphosphate kinase 1 (PPK1) family. Mg(2+) is required as a cofactor. Post-translationally, an intermediate of this reaction is the autophosphorylated ppk in which a phosphate is covalently linked to a histidine residue through a N-P bond.

The enzyme catalyses [phosphate](n) + ATP = [phosphate](n+1) + ADP. Functionally, catalyzes the reversible transfer of the terminal phosphate of ATP to form a long-chain polyphosphate (polyP). The sequence is that of Polyphosphate kinase from Burkholderia ambifaria (strain MC40-6).